The following is a 743-amino-acid chain: ABC-type transporter claG (743 aa).

Asn4 and Asn30 each carry an N-linked (GlcNAc...) asparagine glycan. The helical transmembrane segment at Ser124–Ile144 threads the bilayer. Asn159 carries an N-linked (GlcNAc...) asparagine glycan. An ABC transporter domain is found at Val200–Leu439. Position 234–241 (Gly234–Ser241) interacts with ATP. The next 5 membrane-spanning stretches (helical) occupy residues Tyr507–Ser527, Gly560–Gly580, Ile611–Ser631, Leu636–Ile656, and Asn661–Pro681.

It belongs to the ABC transporter superfamily. ABCG family.

Its subcellular location is the membrane. Its function is as follows. ABC-type transporter; part of the cla gene cluster that produces clavatol and ortho-quinone methide. The clavatol biosynthesis cluster cla and the terrestric acid cluster tra are both involved in the production of peniphenones and penilactones. This chain is ABC-type transporter claG, found in Penicillium crustosum (Blue mold fungus).